The following is a 231-amino-acid chain: Claudin-10 (231 aa).

A helical membrane pass occupies residues 1 to 21; the sequence is MASTASEIIAFMVSISGWVLV. Over 22-80 the chain is Extracellular; the sequence is SSTLPTDYWKVSTIDGTVITTATYWANLWKTCVTDSTGVSNCKDFPSMLALDGYIQACR. Residues 81–101 form a helical membrane-spanning segment; sequence GLMIAAVSLGFFGSIFALIGM. Topologically, residues 102-115 are cytoplasmic; that stretch reads KCTKVGGSDKAKAK. Residues 116–136 traverse the membrane as a helical segment; that stretch reads IACLAGIVFILSGLCSMTGCS. Residues 137-160 are Extracellular-facing; that stretch reads LYANKITTEFFDPLFVEQKYELGA. Residues 161–181 traverse the membrane as a helical segment; it reads ALFIGWAGASLCLIGGVIFCF. Over 182-231 the chain is Cytoplasmic; it reads SISDNNKAPRMGYTYNGATSVMSSRTKYHGREGDLKTPNPSKQFDKNAYV.

This sequence belongs to the claudin family. As to quaternary structure, can form homodimers both in trans (interaction between CLDN10 molecules in opposing membranes) and in cis (interaction between CLDN10 molecules within one membrane). Interacts with CLDN19.

It is found in the cell junction. The protein resides in the tight junction. It localises to the cell membrane. The catalysed reaction is Na(+)(in) = Na(+)(out). It catalyses the reaction Li(+)(in) = Li(+)(out). The enzyme catalyses K(+)(in) = K(+)(out). It carries out the reaction Rb(+)(in) = Rb(+)(out). The catalysed reaction is Cs(+)(in) = Cs(+)(out). It catalyses the reaction NH4(+)(in) = NH4(+)(out). The enzyme catalyses methylamine(out) = methylamine(in). It carries out the reaction Mg(2+)(in) = Mg(2+)(out). The catalysed reaction is Ca(2+)(in) = Ca(2+)(out). It catalyses the reaction Sr(2+)(in) = Sr(2+)(out). The enzyme catalyses chloride(in) = chloride(out). It carries out the reaction nitrate(in) = nitrate(out). Functionally, forms paracellular channels: polymerizes in tight junction strands with cation- and anion-selective channels through the strands, conveying epithelial permeability in a process known as paracellular tight junction permeability. In sweat glands and in the thick ascending limb (TAL) of Henle's loop in kidney, it controls paracellular sodium permeability which is essential for proper sweat production and renal function. In renal proximal tubules, it conveys selective chloride over hydrogencarbonate anion permeability which is required for renal chloride reabsorption and salt homeostasis. This is Claudin-10 (CLDN10) from Bos taurus (Bovine).